Reading from the N-terminus, the 662-residue chain is UvrABC system protein B (662 aa).

Residues 25–182 enclose the Helicase ATP-binding domain; it reads KGIEKREKFQ…KKLVEIQYER (158 aa). Position 38-45 (38-45) interacts with ATP; sequence GVTGSGKT. Positions 91–114 match the Beta-hairpin motif; the sequence is YYDYYQPEAYVAQSDTYIEKDASI. Residues 429-595 enclose the Helicase C-terminal domain; the sequence is QIDDLYTSIQ…TIIKDIREVI (167 aa). Positions 622-657 constitute a UVR domain; sequence DKLIEKYEEEMKEAAQNLQFEKAAHLRDVIYKLKKD.

The protein belongs to the UvrB family. In terms of assembly, forms a heterotetramer with UvrA during the search for lesions. Interacts with UvrC in an incision complex.

Its subcellular location is the cytoplasm. The UvrABC repair system catalyzes the recognition and processing of DNA lesions. A damage recognition complex composed of 2 UvrA and 2 UvrB subunits scans DNA for abnormalities. Upon binding of the UvrA(2)B(2) complex to a putative damaged site, the DNA wraps around one UvrB monomer. DNA wrap is dependent on ATP binding by UvrB and probably causes local melting of the DNA helix, facilitating insertion of UvrB beta-hairpin between the DNA strands. Then UvrB probes one DNA strand for the presence of a lesion. If a lesion is found the UvrA subunits dissociate and the UvrB-DNA preincision complex is formed. This complex is subsequently bound by UvrC and the second UvrB is released. If no lesion is found, the DNA wraps around the other UvrB subunit that will check the other stand for damage. This chain is UvrABC system protein B, found in Clostridium botulinum (strain Langeland / NCTC 10281 / Type F).